Consider the following 283-residue polypeptide: uncharacterized protein (283 aa).

Positions 1-21 (MSAYTHPMERELSGLSSRGNS) are disordered. The chain crosses the membrane as a helical span at residues 41-61 (SIFIASLVTFGVLMITLLIAL).

This sequence belongs to the APS1/VSP family.

The protein localises to the membrane. This is an uncharacterized protein from Arabidopsis thaliana (Mouse-ear cress).